A 114-amino-acid chain; its full sequence is MRSCLKTFRLLSILERKNIPRQPAIRDTADAVIAIILNCNSCGAVNVEVIPGNPSSWLTVVVLSCRRESTLFSSKDDPFNAFKFGGNPSVIILSWRVCFIRHTSDHLFVVFFFW.

This is an uncharacterized protein from Saccharomyces cerevisiae (strain ATCC 204508 / S288c) (Baker's yeast).